The sequence spans 332 residues: Casein kinase II subunit alpha (332 aa).

One can recognise a Protein kinase domain in the interval 34-319 (YEVVRKVGRG…ALEAMTHPYF (286 aa)). ATP contacts are provided by residues 40 to 48 (VGRGKYSEV) and K63. D151 acts as the Proton acceptor in catalysis.

Belongs to the protein kinase superfamily. Ser/Thr protein kinase family. CK2 subfamily. In terms of assembly, tetramer of two alpha and two beta chains (possible).

The enzyme catalyses L-seryl-[protein] + ATP = O-phospho-L-seryl-[protein] + ADP + H(+). It carries out the reaction L-threonyl-[protein] + ATP = O-phospho-L-threonyl-[protein] + ADP + H(+). Functionally, casein kinases are operationally defined by their preferential utilization of acidic proteins such as caseins as substrates. The alpha chain contains the catalytic site. In Zea mays (Maize), this protein is Casein kinase II subunit alpha (ACK2).